We begin with the raw amino-acid sequence, 94 residues long: Small ribosomal subunit protein bS20 (94 aa).

It belongs to the bacterial ribosomal protein bS20 family.

Binds directly to 16S ribosomal RNA. This is Small ribosomal subunit protein bS20 from Acaryochloris marina (strain MBIC 11017).